A 272-amino-acid polypeptide reads, in one-letter code: Putative hydro-lyase RPB_3621 (272 aa).

This sequence belongs to the D-glutamate cyclase family.

This Rhodopseudomonas palustris (strain HaA2) protein is Putative hydro-lyase RPB_3621.